The chain runs to 291 residues: RPE-retinal G protein-coupled receptor (291 aa).

Over 1–15 the chain is Extracellular; that stretch reads MAETSALPTGFGELE. The chain crosses the membrane as a helical span at residues 16–36; sequence VLAVGMVLLVEALSGLSLNTL. The Cytoplasmic portion of the chain corresponds to 37–52; the sequence is TIFSFCKTPELRTPCH. A helical membrane pass occupies residues 53–73; that stretch reads LLVLSLALADSGISLNALVAA. Over 74 to 91 the chain is Extracellular; sequence TSSLLRRWPYGSDGCQAH. Cys-88 and Cys-162 are disulfide-bonded. The helical transmembrane segment at 92-112 threads the bilayer; the sequence is GFQGFVTALASICSSAAIAWG. Residues 113 to 130 lie on the Cytoplasmic side of the membrane; sequence RYHHYCTRSQLAWNSAVS. Residues 131 to 151 traverse the membrane as a helical segment; the sequence is LVLFVWLSSAFWAALPLLGWG. Residues 152–175 lie on the Extracellular side of the membrane; the sequence is HYDYEPLGTCCTLDYSKGDRNFTS. A glycan (N-linked (GlcNAc...) asparagine) is linked at Asn-172. Residues 176–196 traverse the membrane as a helical segment; it reads FLFTMSFFNFAMPLFITITSY. At 197–219 the chain is on the cytoplasmic side; the sequence is SLMEQKLGKSGHLQVNTTLPART. Residues 220-240 form a helical membrane-spanning segment; sequence LLLGWGPYAILYLYAVIADVT. At 241–247 the chain is on the extracellular side; the sequence is SISPKLQ. The helical transmembrane segment at 248–268 threads the bilayer; it reads MVPALIAKMVPTINAINYALG. At Lys-255 the chain carries N6-(retinylidene)lysine. Topologically, residues 269-291 are cytoplasmic; the sequence is NEMVCRGIWQCLSPQKREKDRTK.

This sequence belongs to the G-protein coupled receptor 1 family. Opsin subfamily. Covalently binds all-trans- and 11-cis-retinal. As to expression, preferentially expressed at high levels in the retinal pigment epithelium (RPE) and Mueller cells of the neural retina.

Its subcellular location is the membrane. In terms of biological role, receptor for all-trans- and 11-cis-retinal. Binds preferentially to the former and may catalyze the isomerization of the chromophore by a retinochrome-like mechanism. This is RPE-retinal G protein-coupled receptor (RGR) from Homo sapiens (Human).